A 71-amino-acid chain; its full sequence is Large ribosomal subunit protein uL29 (71 aa).

It belongs to the universal ribosomal protein uL29 family.

This Roseiflexus sp. (strain RS-1) protein is Large ribosomal subunit protein uL29.